We begin with the raw amino-acid sequence, 415 residues long: DNA double-strand break repair protein Mre11 (415 aa).

Residues D10, H12, D51, and N86 each coordinate Mn(2+). H87 acts as the Proton donor in catalysis. Positions 174, 208, and 210 each coordinate Mn(2+).

Belongs to the MRE11/RAD32 family. Homodimer. Forms a heterotetramer composed of two Mre11 subunits and two Rad50 subunits. The cofactor is Mn(2+).

Its activity is regulated as follows. Nuclease activity is regulated by Rad50. Functionally, part of the Rad50/Mre11 complex, which is involved in the early steps of DNA double-strand break (DSB) repair. The complex may facilitate opening of the processed DNA ends to aid in the recruitment of HerA and NurA. Mre11 binds to DSB ends and has both double-stranded 3'-5' exonuclease activity and single-stranded endonuclease activity. This Pyrococcus abyssi (strain GE5 / Orsay) protein is DNA double-strand break repair protein Mre11.